The primary structure comprises 90 residues: Probable Fe(2+)-trafficking protein (90 aa).

The protein belongs to the Fe(2+)-trafficking protein family. In terms of assembly, monomer.

Could be a mediator in iron transactions between iron acquisition and iron-requiring processes, such as synthesis and/or repair of Fe-S clusters in biosynthetic enzymes. This Edwardsiella ictaluri (strain 93-146) protein is Probable Fe(2+)-trafficking protein.